Consider the following 123-residue polypeptide: Small ribosomal subunit protein uS13c (123 aa).

A disordered region spans residues 99 to 123 (GQRTRSNARTRRGAKKTVAGKKLAK). Positions 100–123 (QRTRSNARTRRGAKKTVAGKKLAK) are enriched in basic residues.

Belongs to the universal ribosomal protein uS13 family. As to quaternary structure, part of the 30S ribosomal subunit.

The protein resides in the plastid. Its subcellular location is the chloroplast. Its function is as follows. Located at the top of the head of the 30S subunit, it contacts several helices of the 16S rRNA. The sequence is that of Small ribosomal subunit protein uS13c from Cyanidioschyzon merolae (strain NIES-3377 / 10D) (Unicellular red alga).